We begin with the raw amino-acid sequence, 177 residues long: ATP synthase subunit b, chloroplastic (177 aa).

Residues 22–42 (ILETNIINLAAVVGIVVFFVG) form a helical membrane-spanning segment.

Belongs to the ATPase B chain family. In terms of assembly, F-type ATPases have 2 components, F(1) - the catalytic core - and F(0) - the membrane proton channel. F(1) has five subunits: alpha(3), beta(3), gamma(1), delta(1), epsilon(1). F(0) has four main subunits: a(1), b(1), b'(1) and c(10-14). The alpha and beta chains form an alternating ring which encloses part of the gamma chain. F(1) is attached to F(0) by a central stalk formed by the gamma and epsilon chains, while a peripheral stalk is formed by the delta, b and b' chains.

It localises to the plastid. The protein resides in the chloroplast thylakoid membrane. Functionally, f(1)F(0) ATP synthase produces ATP from ADP in the presence of a proton or sodium gradient. F-type ATPases consist of two structural domains, F(1) containing the extramembraneous catalytic core and F(0) containing the membrane proton channel, linked together by a central stalk and a peripheral stalk. During catalysis, ATP synthesis in the catalytic domain of F(1) is coupled via a rotary mechanism of the central stalk subunits to proton translocation. In terms of biological role, component of the F(0) channel, it forms part of the peripheral stalk, linking F(1) to F(0). This Oedogonium cardiacum (Filamentous green alga) protein is ATP synthase subunit b, chloroplastic.